The primary structure comprises 142 residues: Ctenidin-3 (142 aa).

An N-terminal signal peptide occupies residues 1–19 (MKHLIPLIVMASVVLAVYA). Residue Y139 is modified to Tyrosine amide.

As to expression, expressed in hemocytes (at protein level).

It is found in the secreted. Antimicrobial protein with bacteriostatic activity against the Gram-negative bacterium E.coli, and very weak activity against the Gram-positive bacterium S.aureus. Lacks activity against the yeast C.albicans. In Cupiennius salei (American wandering spider), this protein is Ctenidin-3.